The sequence spans 241 residues: Triosephosphate isomerase (241 aa).

Position 9 to 11 (N9 to K11) interacts with substrate. H96 acts as the Electrophile in catalysis. E165 acts as the Proton acceptor in catalysis. Substrate contacts are provided by residues G171, S204, and G225–G226.

This sequence belongs to the triosephosphate isomerase family. In terms of assembly, homodimer.

Its subcellular location is the cytoplasm. The enzyme catalyses D-glyceraldehyde 3-phosphate = dihydroxyacetone phosphate. It participates in carbohydrate biosynthesis; gluconeogenesis. It functions in the pathway carbohydrate degradation; glycolysis; D-glyceraldehyde 3-phosphate from glycerone phosphate: step 1/1. Functionally, involved in the gluconeogenesis. Catalyzes stereospecifically the conversion of dihydroxyacetone phosphate (DHAP) to D-glyceraldehyde-3-phosphate (G3P). This is Triosephosphate isomerase from Prochlorococcus marinus (strain MIT 9312).